The sequence spans 150 residues: Aspartate 1-decarboxylase (150 aa).

Catalysis depends on serine 24, which acts as the Schiff-base intermediate with substrate; via pyruvic acid. At serine 24 the chain carries Pyruvic acid (Ser). Substrate is bound at residue threonine 56. Tyrosine 57 functions as the Proton donor in the catalytic mechanism. 72–74 provides a ligand contact to substrate; that stretch reads GAA.

This sequence belongs to the PanD family. Heterooctamer of four alpha and four beta subunits. Requires pyruvate as cofactor. Post-translationally, is synthesized initially as an inactive proenzyme, which is activated by self-cleavage at a specific serine bond to produce a beta-subunit with a hydroxyl group at its C-terminus and an alpha-subunit with a pyruvoyl group at its N-terminus.

It is found in the cytoplasm. It carries out the reaction L-aspartate + H(+) = beta-alanine + CO2. Its pathway is cofactor biosynthesis; (R)-pantothenate biosynthesis; beta-alanine from L-aspartate: step 1/1. Catalyzes the pyruvoyl-dependent decarboxylation of aspartate to produce beta-alanine. This chain is Aspartate 1-decarboxylase, found in Xanthobacter autotrophicus (strain ATCC BAA-1158 / Py2).